The chain runs to 175 residues: Ribosome maturation factor RimM (175 aa).

The region spanning 94 to 166 (SDSWYEHELI…FIRLVPPGGL (73 aa)) is the PRC barrel domain.

This sequence belongs to the RimM family. In terms of assembly, binds ribosomal protein uS19.

It is found in the cytoplasm. An accessory protein needed during the final step in the assembly of 30S ribosomal subunit, possibly for assembly of the head region. Essential for efficient processing of 16S rRNA. May be needed both before and after RbfA during the maturation of 16S rRNA. It has affinity for free ribosomal 30S subunits but not for 70S ribosomes. In Renibacterium salmoninarum (strain ATCC 33209 / DSM 20767 / JCM 11484 / NBRC 15589 / NCIMB 2235), this protein is Ribosome maturation factor RimM.